The sequence spans 319 residues: Curved DNA-binding protein (319 aa).

In terms of domain architecture, J spans 5–69; that stretch reads DYYKILGVEP…QKRAEFDEIR (65 aa).

The protein resides in the cytoplasm. Its subcellular location is the nucleoid. Functionally, DNA-binding protein that preferentially recognizes a curved DNA sequence. It is probably a functional analog of DnaJ; displays overlapping activities with DnaJ, but functions under different conditions, probably acting as a molecular chaperone in an adaptive response to environmental stresses other than heat shock. Lacks autonomous chaperone activity; binds native substrates and targets them for recognition by DnaK. Its activity is inhibited by the binding of CbpM. The protein is Curved DNA-binding protein of Pseudomonas putida (strain ATCC 47054 / DSM 6125 / CFBP 8728 / NCIMB 11950 / KT2440).